Reading from the N-terminus, the 470-residue chain is Argininosuccinate lyase (470 aa).

This sequence belongs to the lyase 1 family. Argininosuccinate lyase subfamily.

It localises to the cytoplasm. The enzyme catalyses 2-(N(omega)-L-arginino)succinate = fumarate + L-arginine. It functions in the pathway amino-acid biosynthesis; L-arginine biosynthesis; L-arginine from L-ornithine and carbamoyl phosphate: step 3/3. This is Argininosuccinate lyase from Leptospira borgpetersenii serovar Hardjo-bovis (strain L550).